The chain runs to 132 residues: UPF0292 protein PYRAB04740 (132 aa).

A Toprim domain is found at 20–100 (DGAIIVEGPR…KVDTETRRSL (81 aa)). 3 residues coordinate Mg(2+): E26, D69, and D71.

This sequence belongs to the UPF0292 family. It depends on Mg(2+) as a cofactor.

The protein is UPF0292 protein PYRAB04740 of Pyrococcus abyssi (strain GE5 / Orsay).